We begin with the raw amino-acid sequence, 315 residues long: Ribosomal RNA small subunit methyltransferase H (315 aa).

Residues 35-37, Asp55, Phe80, Asp102, and Gln109 contribute to the S-adenosyl-L-methionine site; that span reads GGH.

It belongs to the methyltransferase superfamily. RsmH family.

It localises to the cytoplasm. The catalysed reaction is cytidine(1402) in 16S rRNA + S-adenosyl-L-methionine = N(4)-methylcytidine(1402) in 16S rRNA + S-adenosyl-L-homocysteine + H(+). Specifically methylates the N4 position of cytidine in position 1402 (C1402) of 16S rRNA. This chain is Ribosomal RNA small subunit methyltransferase H, found in Shewanella halifaxensis (strain HAW-EB4).